A 95-amino-acid polypeptide reads, in one-letter code: Aspartyl/glutamyl-tRNA(Asn/Gln) amidotransferase subunit C (95 aa).

It belongs to the GatC family. As to quaternary structure, heterotrimer of A, B and C subunits.

It catalyses the reaction L-glutamyl-tRNA(Gln) + L-glutamine + ATP + H2O = L-glutaminyl-tRNA(Gln) + L-glutamate + ADP + phosphate + H(+). The catalysed reaction is L-aspartyl-tRNA(Asn) + L-glutamine + ATP + H2O = L-asparaginyl-tRNA(Asn) + L-glutamate + ADP + phosphate + 2 H(+). Functionally, allows the formation of correctly charged Asn-tRNA(Asn) or Gln-tRNA(Gln) through the transamidation of misacylated Asp-tRNA(Asn) or Glu-tRNA(Gln) in organisms which lack either or both of asparaginyl-tRNA or glutaminyl-tRNA synthetases. The reaction takes place in the presence of glutamine and ATP through an activated phospho-Asp-tRNA(Asn) or phospho-Glu-tRNA(Gln). In Caldanaerobacter subterraneus subsp. tengcongensis (strain DSM 15242 / JCM 11007 / NBRC 100824 / MB4) (Thermoanaerobacter tengcongensis), this protein is Aspartyl/glutamyl-tRNA(Asn/Gln) amidotransferase subunit C.